A 297-amino-acid chain; its full sequence is tRNA-cytidine(32) 2-sulfurtransferase (297 aa).

The short motif at 61-66 (SGGKDS) is the PP-loop motif element. The [4Fe-4S] cluster site is built by Cys-136, Cys-139, and Cys-227.

The protein belongs to the TtcA family. Homodimer. Requires Mg(2+) as cofactor. The cofactor is [4Fe-4S] cluster.

Its subcellular location is the cytoplasm. It catalyses the reaction cytidine(32) in tRNA + S-sulfanyl-L-cysteinyl-[cysteine desulfurase] + AH2 + ATP = 2-thiocytidine(32) in tRNA + L-cysteinyl-[cysteine desulfurase] + A + AMP + diphosphate + H(+). It functions in the pathway tRNA modification. Its function is as follows. Catalyzes the ATP-dependent 2-thiolation of cytidine in position 32 of tRNA, to form 2-thiocytidine (s(2)C32). The sulfur atoms are provided by the cysteine/cysteine desulfurase (IscS) system. The protein is tRNA-cytidine(32) 2-sulfurtransferase of Paracoccus denitrificans (strain Pd 1222).